The following is a 56-amino-acid chain: uncharacterized protein (56 aa).

The chain crosses the membrane as a helical span at residues 12–32; the sequence is GITLFPYFAILILILAILVVG. The segment at 19–31 is hydrophobic; the sequence is FAILILILAILVV.

It is found in the membrane. This is an uncharacterized protein from Chenopodium amaranticolor (Quinoa).